Here is a 257-residue protein sequence, read N- to C-terminus: Nickel import system ATP-binding protein NikD (257 aa).

Residues 4-245 (IDIQNLTIKN…HLHPYTERLI (242 aa)) enclose the ABC transporter domain. 37–44 (GESGAGKS) is a binding site for ATP.

This sequence belongs to the ABC transporter superfamily. In terms of assembly, the complex is composed of two ATP-binding proteins (NikD and NikE), two transmembrane proteins (NikB and NikC) and a solute-binding protein (NikA).

Its subcellular location is the cell membrane. It catalyses the reaction Ni(2+)(out) + ATP + H2O = Ni(2+)(in) + ADP + phosphate + H(+). Its function is as follows. Part of the ABC transporter complex NikABCDE (Opp2) involved in nickel import. Probably responsible for energy coupling to the transport system. This is Nickel import system ATP-binding protein NikD from Staphylococcus aureus (strain MRSA252).